Here is a 3511-residue protein sequence, read N- to C-terminus: Unconventional myosin-XV (3511 aa).

4 disordered regions span residues 1–44 (MADE…TPKI), 574–690 (KKPI…SLRQ), 712–1030 (FAEP…PNKN), and 1105–1135 (VSSF…PQAC). The segment covering 622-634 (SQPQARNNNNSHG) has biased composition (polar residues). A compositionally biased stretch (pro residues) spans 654 to 672 (PPMPAPSPSPASPLTPPFS). Residues 769 to 792 (PSLRSLPGQGYHSPLGPLSPQLSL) are compositionally biased toward low complexity. Residues 797 to 807 (FQPPFPPPPRR) show a composition bias toward pro residues. Positions 1206 to 1883 (DGVEDMTQLE…LHQLLESMRE (678 aa)) constitute a Myosin motor domain. 1299 to 1306 (GESGSGKT) is a binding site for ATP. The stretch at 1307 to 1334 (EATKLILRCLAAMNQRRDVMQQIKILEA) forms a coiled coil. An actin-binding region spans residues 1776 to 1783 (FVRCLKPN). Positions 1872–2013 (EHLHQLLESM…SSGPRVAVVR (142 aa)) are neck or regulatory domain. IQ domains are found at residues 1886–1908 (QNRA…HFRS) and 1909–1938 (LRRK…SLLK). Residues 2014 to 3511 (APRLQAEPCV…TLPPSEITLL (1498 aa)) form a tail region. Positions 2049–2195 (MLTVPLKMPL…PTQLEWTAIQ (147 aa)) constitute a MyTH4 1 domain. Disordered regions lie at residues 2330 to 2359 (SHKE…GEST), 2392 to 2425 (YRMK…PIPG), 2460 to 2509 (PLSA…SVAK), 2565 to 2584 (KQPP…GKVF), and 2629 to 2648 (RPCM…PPED). The segment covering 2337-2351 (NGETEAQRWTSNRQA) has biased composition (polar residues). Residues 2395–2406 (KGGGQPGGGGGS) show a composition bias toward gly residues. Residues 2410–2420 (DTSRRPPEPKL) show a composition bias toward basic and acidic residues. Basic and acidic residues predominate over residues 2573–2584 (PEARRTDGGKVF). The SH3 domain maps to 2848-2934 (KDSDYVVAVR…PSELVQPAAA (87 aa)). The disordered stretch occupies residues 2964 to 2984 (EVGRRREGPPVRARSADSGED). The segment covering 2965–2980 (VGRRREGPPVRARSAD) has biased composition (basic and acidic residues). The MyTH4 2 domain maps to 3031-3185 (FTKVPIQESL…PSNMELRAML (155 aa)). The region spanning 3190–3511 (SKRQLFLLPG…TLPPSEITLL (322 aa)) is the FERM domain.

Belongs to the TRAFAC class myosin-kinesin ATPase superfamily. Myosin family. As to quaternary structure, interacts with the third PDZ domain of WHRN which is necessary for localization of WHRN to stereocilium tips. Interacts with FASLG. Interacts with EPS8. In terms of tissue distribution, in the developing inner ear, expressed in cochlea and vestibular apparatus. Expression appears to be restricted to cochlear neurosensory cells and upper epithelial layer of macula saccula. Also expressed in macula utriculi and cristae ampullaris of the semicircular canals. In adult cochlear hair cells, highest expression in stereocilia and apical body.

It is found in the cell projection. The protein localises to the stereocilium. The protein resides in the cytoplasm. It localises to the cytoskeleton. Its function is as follows. Myosins are actin-based motor molecules with ATPase activity. Unconventional myosins serve in intracellular movements. Their highly divergent tails are presumed to bind to membranous compartments, which would be moved relative to actin filaments. Required for the arrangement of stereocilia in mature hair bundles. This is Unconventional myosin-XV (Myo15a) from Mus musculus (Mouse).